A 358-amino-acid polypeptide reads, in one-letter code: Glycerol-3-phosphate dehydrogenase [NAD(P)+] (358 aa).

Positions 33, 34, 54, and 128 each coordinate NADPH. Sn-glycerol 3-phosphate is bound by residues Lys128 and Gly156. Ala160 is an NADPH binding site. Sn-glycerol 3-phosphate is bound by residues Lys211, Asp264, Ser274, Arg275, and Asn276. The active-site Proton acceptor is the Lys211. Arg275 contacts NADPH. NADPH contacts are provided by Val299 and Glu301.

It belongs to the NAD-dependent glycerol-3-phosphate dehydrogenase family.

The protein localises to the cytoplasm. The enzyme catalyses sn-glycerol 3-phosphate + NAD(+) = dihydroxyacetone phosphate + NADH + H(+). It catalyses the reaction sn-glycerol 3-phosphate + NADP(+) = dihydroxyacetone phosphate + NADPH + H(+). The protein operates within membrane lipid metabolism; glycerophospholipid metabolism. Its function is as follows. Catalyzes the reduction of the glycolytic intermediate dihydroxyacetone phosphate (DHAP) to sn-glycerol 3-phosphate (G3P), the key precursor for phospholipid synthesis. This chain is Glycerol-3-phosphate dehydrogenase [NAD(P)+], found in Saccharophagus degradans (strain 2-40 / ATCC 43961 / DSM 17024).